A 117-amino-acid chain; its full sequence is Ig heavy chain V region RF (117 aa).

A signal peptide spans 1-19 (MNFGLRLIFLVLVLKGVLC). Positions 20–49 (DVKLVESGGGLVKLGGSLKLSCAASGFTFS) are framework-1. A disulfide bond links Cys-41 and Cys-115. A complementarity-determining-1 region spans residues 50–54 (SYYMS). Residues 55–68 (WVRQTPEKRLELVA) form a framework-2 region. The complementarity-determining-2 stretch occupies residues 69-85 (AINSNGGSTYYPDTVKG). Positions 86-117 (RFTISRDNAKNTLYLQMSSLKSEDTALYYCAR) are framework-3.

The polypeptide is Ig heavy chain V region RF (Mus musculus (Mouse)).